The following is a 289-amino-acid chain: Diaminopimelate epimerase (289 aa).

Substrate contacts are provided by Asn11 and Asn78. Residue Cys87 is the Proton donor of the active site. Residues 88-89 (GN), Asn163, Asn199, and 217-218 (ER) each bind substrate. The active-site Proton acceptor is Cys226. A substrate-binding site is contributed by 227–228 (GT).

The protein belongs to the diaminopimelate epimerase family. Homodimer.

The protein localises to the cytoplasm. It carries out the reaction (2S,6S)-2,6-diaminopimelate = meso-2,6-diaminopimelate. Its pathway is amino-acid biosynthesis; L-lysine biosynthesis via DAP pathway; DL-2,6-diaminopimelate from LL-2,6-diaminopimelate: step 1/1. In terms of biological role, catalyzes the stereoinversion of LL-2,6-diaminopimelate (L,L-DAP) to meso-diaminopimelate (meso-DAP), a precursor of L-lysine and an essential component of the bacterial peptidoglycan. The chain is Diaminopimelate epimerase from Mycolicibacterium vanbaalenii (strain DSM 7251 / JCM 13017 / BCRC 16820 / KCTC 9966 / NRRL B-24157 / PYR-1) (Mycobacterium vanbaalenii).